A 530-amino-acid polypeptide reads, in one-letter code: Type 2 DNA topoisomerase 6 subunit B (530 aa).

Residues Asn-42, Asp-76, 97 to 98 (SK), 106 to 113 (GMYGLGVK), and Lys-427 contribute to the ATP site.

The protein belongs to the TOP6B family. In terms of assembly, homodimer. Heterotetramer of two Top6A and two Top6B chains.

It catalyses the reaction ATP-dependent breakage, passage and rejoining of double-stranded DNA.. Functionally, relaxes both positive and negative superturns and exhibits a strong decatenase activity. This is Type 2 DNA topoisomerase 6 subunit B from Saccharolobus solfataricus (strain ATCC 35092 / DSM 1617 / JCM 11322 / P2) (Sulfolobus solfataricus).